The sequence spans 122 residues: Large ribosomal subunit protein bL12 (122 aa).

Belongs to the bacterial ribosomal protein bL12 family. As to quaternary structure, homodimer. Part of the ribosomal stalk of the 50S ribosomal subunit. Forms a multimeric L10(L12)X complex, where L10 forms an elongated spine to which 2 to 4 L12 dimers bind in a sequential fashion. Binds GTP-bound translation factors.

In terms of biological role, forms part of the ribosomal stalk which helps the ribosome interact with GTP-bound translation factors. Is thus essential for accurate translation. The chain is Large ribosomal subunit protein bL12 from Deinococcus radiodurans (strain ATCC 13939 / DSM 20539 / JCM 16871 / CCUG 27074 / LMG 4051 / NBRC 15346 / NCIMB 9279 / VKM B-1422 / R1).